The sequence spans 51 residues: Glutamate dehydrogenase (51 aa).

Lys-31 contacts substrate.

It belongs to the Glu/Leu/Phe/Val dehydrogenases family. As to quaternary structure, homohexamer.

Its subcellular location is the mitochondrion matrix. It carries out the reaction L-glutamate + NAD(+) + H2O = 2-oxoglutarate + NH4(+) + NADH + H(+). The enzyme catalyses L-glutamate + NADP(+) + H2O = 2-oxoglutarate + NH4(+) + NADPH + H(+). In terms of biological role, mitochondrial glutamate dehydrogenase that converts L-glutamate into alpha-ketoglutarate. Plays a key role in glutamine anaplerosis by producing alpha-ketoglutarate, an important intermediate in the tricarboxylic acid cycle. This chain is Glutamate dehydrogenase, found in Electrophorus electricus (Electric eel).